A 403-amino-acid chain; its full sequence is Forkhead box protein Q1 (403 aa).

Disordered regions lie at residues 1-75 (MKLE…PGAE) and 94-116 (GAAGPGAGGAGSGEGARSKPYTR). Over residues 32–48 (LSAAGDDSLGSDGDCAA) the composition is skewed to low complexity. Over residues 96–107 (AGPGAGGAGSGE) the composition is skewed to gly residues. The segment at residues 119-214 (KPPYSYIALI…ADGVFRRRRK (96 aa)) is a DNA-binding region (fork-head). Residues 216–266 (LSHRAPVPAPGLRPEEAPGLPAAPPPAPAAPASPRMRSPARQEERASPAGK) are disordered. Positions 236–246 (PAAPPPAPAAP) are enriched in pro residues.

In terms of tissue distribution, expressed predominantly in the stomach, trachea, bladder and salivary gland.

Its subcellular location is the nucleus. In terms of biological role, plays a role in hair follicle differentiation. This is Forkhead box protein Q1 (FOXQ1) from Homo sapiens (Human).